We begin with the raw amino-acid sequence, 254 residues long: Germin-like protein 4-1 (254 aa).

The first 27 residues, 1–27 (MASRAFAAVFAAVALVVCSSVLPRALA), serve as a signal peptide directing secretion. C37 and C52 form a disulfide bridge. The Cupin type-1 domain maps to 67 to 220 (KALGVPGNTV…AFMIDKDQVD (154 aa)). Residues H115, H117, E122, and H166 each coordinate Mn(2+).

The protein belongs to the germin family. In terms of assembly, oligomer (believed to be a pentamer but probably hexamer).

The protein resides in the secreted. Its subcellular location is the extracellular space. The protein localises to the apoplast. In terms of biological role, may play a role in plant defense. Probably has no oxalate oxidase activity even if the active site is conserved. This chain is Germin-like protein 4-1, found in Oryza sativa subsp. japonica (Rice).